We begin with the raw amino-acid sequence, 137 residues long: ATP synthase epsilon chain (137 aa).

The protein belongs to the ATPase epsilon chain family. As to quaternary structure, F-type ATPases have 2 components, CF(1) - the catalytic core - and CF(0) - the membrane proton channel. CF(1) has five subunits: alpha(3), beta(3), gamma(1), delta(1), epsilon(1). CF(0) has three main subunits: a, b and c.

The protein resides in the cell membrane. Functionally, produces ATP from ADP in the presence of a proton gradient across the membrane. This chain is ATP synthase epsilon chain, found in Mycoplasmopsis synoviae (strain 53) (Mycoplasma synoviae).